The primary structure comprises 218 residues: Adenylate kinase (218 aa).

10 to 15 (GAGKGT) is a binding site for ATP. Residues 30-59 (STGDMLRAAVKAGTPLGQQAKAVMDAGKLV) form an NMP region. AMP-binding positions include Thr31, Arg36, 57–59 (KLV), 85–88 (GFPR), and Gln92. Positions 122–159 (GRRSHPASGRTYHVKFNPPKVEGKDDVTGEDLIQREDD) are LID. ATP contacts are provided by residues Arg123 and 132-133 (TY). The segment at 127–147 (PASGRTYHVKFNPPKVEGKDD) is disordered. Residues Arg156 and Arg167 each contribute to the AMP site. An ATP-binding site is contributed by Gly203.

The protein belongs to the adenylate kinase family. In terms of assembly, monomer.

It localises to the cytoplasm. It carries out the reaction AMP + ATP = 2 ADP. It participates in purine metabolism; AMP biosynthesis via salvage pathway; AMP from ADP: step 1/1. Its function is as follows. Catalyzes the reversible transfer of the terminal phosphate group between ATP and AMP. Plays an important role in cellular energy homeostasis and in adenine nucleotide metabolism. This chain is Adenylate kinase, found in Paracidovorax citrulli (strain AAC00-1) (Acidovorax citrulli).